A 1745-amino-acid chain; its full sequence is MQLKYMKTLLTPQDGAAKVTCMAWAPNNAKFAVCTIDRVVILYDEQGEKRDRFTTKPADPKYGKKTYVVKSMAFSPDSTKIAVAQTDNIIFVYKIGEEWGDKKVICNKFIQTSAVTSLVWPSEHAIIFGLAEGKVRQANTKTSKSSTIYGTDSYVVSLTSNVSGKGILSGHADGTVVRYFIDDEGSGESQGKLLTHACPPYALAWGTNSIIVAGCDKKIVAYGKEGNVIQTFDYSRDRAEKEFTVAASSPSGQSIVVGSFDRLRVFNWSPRKGTWDESSPKEIPNLYTITALSWKKDGSRLSVGTLCGGVEMFDCCLRRSIYKNKFEMTYVGLSQVIVRNLSTGTRVVLKSQYGYEIDEVKVMGKDQYLVAHTSDTLLLGDLVSNKLSEVAWQGSGGNEKFFFENETVCMIFNAGELALVEYGSNDILGSVRTEFMNPHLISVRLNERRQRGVEDNKKLAYLIDIKTIAIVDLVGGYNLGTISHDSKIDWLELNETGRKLLFRDKKLRLHLYDIESSVKSTMLSFCPYVQWVPGSDVVVAQNRGNLCVWYTIDSPERVTMFPLKGDIVDLERSNGKTEVIVNEGVNSISYTLDEGLIEFGTAIDDGDYYRATAFLETLEMSAETEAMWKTLSKLSLEAQQLHIAERCFAALGDVSKARFLNETNKIADAVAKEYDGDGTDHYQVKARLAMLDKNFKLAEMYYMEQNAVDEVMEMYQELHMWDECIAVAEGKGHPELDNLRRSYYSYLMETNQNEKAAEVKENEGDFTGAVNLYLKAGLPAKAAWLAMSKDELLSSQDIVSRITAALIKGEFYERAGDLFERTRNNQRALECYRKGNAFKKAVDLARVAFPAEVVKLEEVWGDYLVQQKQMDAAINHYIEAGRSIKAIEAAIAARQWKKALHILELQEDRTAAKYYLKIAQYYASVQEFEVAERLFVKGDHIKDAIDMYTQAGRWEQAHKLAVKCMTQEDVSVLYVSRAQELEKEGKYKEAERLFTTVDEPDLAITMYKKNKMYDDMIRLVAVHHKDLLQETHIHLAKELEAESRFQEAEYHYLEGQDWKAAVNMYRVNDMWEEAYRIAKTHGGANAHKQVAYLWAKSLGGEAAVKLLNKFGLLETAIDFAADNYTFDFAFELARLSMKQKIPDIHLKNAMFLEDQGKFNEAEIEFIKAGKPKEAVLMHVHNKDWSNAQRVAEAHDPESVADILVSQAKFCFDQKEFQKAEAFLLRAQRPELAIKYYKDAGMWTDAMRICKDYLPSKLSVLQKEYESEGNWGVEGMIEQAQEWEQTGEYSRAVDCYLKVKDSSNLDLLLKCWMKAAELAIKFLSHDKAVDVSQIVGPRLIQLRKYNEAAELYLNLDLIKNAIDAFIEGEEWNKAKRVAKELDPRLEEYVDKRYKEHLKNQGKVDSLVGVDVVAALDMYAERGQWEKCIDTASKQNFKVLHKYIALYATHLIKEGEVEKVLSLYIQHGVPAYSQNFNIYKRMFQELVNLRDRDCAEAFRMWSDLRDVLLLLCENLTKSSEANSPAHEEFEQMLLVAHYYATRSAAKGIDQLSSVAAKLSISLLRHTELIPADKAFYEAGLAAKAVGWENMAFIFLNRFLDLADGIDEGTLDALDHTDFQDTDIPFEVPVPSRLHVTVEKREEIREWVLTVSMDQRVEQVLPKDERGTYEASLVAASTGIRSLPCVITGYPVLRNKIEFKRPGMAANKDDWNKFLMATKTTHSPECQDVLKFITQWCGGLPSAGYSFH.

10 WD repeats span residues 14-53, 64-103, 110-148, 150-190, 195-233, 238-278, 284-323, 483-521, 522-559, and 680-725; these read DGAAKVTCMAWAPNNAKFAVCTIDRVVILYDEQGEKRDRF, KKTYVVKSMAFSPDSTKIAVAQTDNIIFVYKIGEEWGDKK, IQTSAVTSLVWPSEHAIIFGLAEGKVRQANTKTSKSSTI, GTDS…GESQ, THACPPYALAWGTNSIIVAGCDKKIVAYGKEGNVIQTFD, RAEK…WDES, PNLYTITALSWKKDGSRLSVGTLCGGVEMFDCCLRRSIYK, SHDSKIDWLELNETGRKLLFRDKKLRLHLYDIESSVKST, MLSFCPYVQWVPGSDVVVAQNRGNLCVWYTIDSPERVT, and DHYQ…DECI. 11 TPR repeats span residues 691–725, 750–784, 809–842, 854–887, 912–945, 947–971, 972–1004, 1042–1075, 1272–1305, 1328–1361, and 1407–1441; these read LDKNFKLAEMYYMEQNAVDEVMEMYQELHMWDECI, TNQNEKAAEVKENEGDFTGAVNLYLKAGLPAKAAW, GEFYERAGDLFERTRNNQRALECYRKGNAFKKAV, VKLEEVWGDYLVQQKQMDAAINHYIEAGRSIKAI, AKYYLKIAQYYASVQEFEVAERLFVKGDHIKDAI, MYTQAGRWEQAHKLAVKCMTQEDVS, VLYVSRAQELEKEGKYKEAERLFTTVDEPDLAI, ESRFQEAEYHYLEGQDWKAAVNMYRVNDMWEEAY, VEGMIEQAQEWEQTGEYSRAVDCYLKVKDSSNLD, VDVSQIVGPRLIQLRKYNEAAELYLNLDLIKNAI, and GVDVVAALDMYAERGQWEKCIDTASKQNFKVLHKY.

Belongs to the IFT172 family.

The protein resides in the cell projection. Its subcellular location is the cilium. In terms of biological role, required for the maintenance and formation of cilia. This is Intraflagellar transport protein 172 homolog (ift172) from Danio rerio (Zebrafish).